The following is an 86-amino-acid chain: Small ribosomal subunit protein bS20 (86 aa).

Basic residues predominate over residues 1-11; sequence MANIKQQKKRN. The segment at 1–20 is disordered; it reads MANIKQQKKRNKTNEKRRLQ.

The protein belongs to the bacterial ribosomal protein bS20 family.

In terms of biological role, binds directly to 16S ribosomal RNA. The chain is Small ribosomal subunit protein bS20 from Aster yellows witches'-broom phytoplasma (strain AYWB).